The following is a 366-amino-acid chain: 8-hydroxyquercetin 8-O-methyltransferase (366 aa).

S-adenosyl-L-methionine is bound by residues 207–210, 231–232, 251–252, and K265; these read VGGG, DL, and DM. Catalysis depends on H269, which acts as the Proton acceptor.

The protein belongs to the class I-like SAM-binding methyltransferase superfamily. Cation-independent O-methyltransferase family. COMT subfamily. Homodimer.

The catalysed reaction is 3,3',4',5,7,8-hexahydroxyflavone + S-adenosyl-L-methionine = 3,3',4',5,7-pentahydroxy-8-methoxyflavone + S-adenosyl-L-homocysteine + H(+). It carries out the reaction 4',7,8-trihydroxyflavone + S-adenosyl-L-methionine = 4',7-dihydroxy-8-methoxyflavone + S-adenosyl-L-homocysteine + H(+). The enzyme catalyses 8-hydroxy-7-methoxyflavone + S-adenosyl-L-methionine = 7,8-dimethoxyflavone + S-adenosyl-L-homocysteine + H(+). Its pathway is flavonoid metabolism. Its function is as follows. Flavonoid 8-O-methyltransferase involved in the biosynthesis of polymethoxylated flavonoids natural products such as pebrellin, aroma compounds which contribute to the flavor of peppermint, and exhibit pharmacological activities such as anti-allergic, anti-oxidant, antibacterial, anti-proliferative, and anti-inflammatory effects. Catalyzes S-adenosylmethionine-dependent regioselective 8-O-methylation of flavonoids; active on various hydroxylated flavonoid substrates, including 7,8,3'4'-tetrahydroxy-flavone, 7,8,4'-trihydroxy-flavone and 8-hydroxy-flavone 7-methyl ether. The chain is 8-hydroxyquercetin 8-O-methyltransferase from Mentha piperita (Peppermint).